Here is a 233-residue protein sequence, read N- to C-terminus: Antilisterial bacteriocin subtilosin biosynthesis protein AlbG (233 aa).

6 helical membrane passes run 7–27 (FTLL…VQAV), 46–66 (GLLA…LHYV), 116–136 (TYVM…FEIV), 145–165 (TPPA…LFCM), 176–198 (GSLF…MLSF), and 203–220 (LLFL…SFIY).

It is found in the cell membrane. Its function is as follows. Involved in the production of the bacteriocin subtilosin. This chain is Antilisterial bacteriocin subtilosin biosynthesis protein AlbG (albG), found in Bacillus subtilis (strain 168).